Reading from the N-terminus, the 422-residue chain is UDP-N-acetylglucosamine 1-carboxyvinyltransferase (422 aa).

Residue 22-23 participates in phosphoenolpyruvate binding; that stretch reads KN. Position 93 (arginine 93) interacts with UDP-N-acetyl-alpha-D-glucosamine. Cysteine 117 functions as the Proton donor in the catalytic mechanism. Cysteine 117 carries the 2-(S-cysteinyl)pyruvic acid O-phosphothioketal modification. Residues 122–126, aspartate 305, and isoleucine 327 contribute to the UDP-N-acetyl-alpha-D-glucosamine site; that span reads RPVDQ.

This sequence belongs to the EPSP synthase family. MurA subfamily.

It localises to the cytoplasm. It carries out the reaction phosphoenolpyruvate + UDP-N-acetyl-alpha-D-glucosamine = UDP-N-acetyl-3-O-(1-carboxyvinyl)-alpha-D-glucosamine + phosphate. Its pathway is cell wall biogenesis; peptidoglycan biosynthesis. In terms of biological role, cell wall formation. Adds enolpyruvyl to UDP-N-acetylglucosamine. This chain is UDP-N-acetylglucosamine 1-carboxyvinyltransferase, found in Bordetella bronchiseptica (strain ATCC BAA-588 / NCTC 13252 / RB50) (Alcaligenes bronchisepticus).